The chain runs to 59 residues: Bacteriocin curvacin-A (59 aa).

The propeptide occupies 1 to 18; it reads MNNVKELSMTELQTITGG. The cysteines at positions 28 and 33 are disulfide-linked.

It belongs to the bacteriocin class IIA/YGNGV family.

The protein resides in the secreted. Functionally, bactericidal activity; inhibits closely related Lactobacilli, Listeria monocytogenes and ivanovvi, Enterococcus faecalis, Carnobacterium sp and Brocothrix thermosphacta. The polypeptide is Bacteriocin curvacin-A (curA) (Latilactobacillus curvatus (Lactobacillus curvatus)).